The chain runs to 457 residues: Polygalacturonase-2 (457 aa).

An N-terminal signal peptide occupies residues 1–24 (MVIQRNSILLLIIIFASSISTCRS). The propeptide occupies 25-71 (NVIDDNLFKQVYDNILEQEFAHDFQAYLSYLSKNIESNNNIDKVDKN). N-linked (GlcNAc...) asparagine glycosylation is found at Asn189 and Asn240. 2 PbH1 repeats span residues 228-255 (SCTNVVASNLMINASAKSPNTDGVHVSN) and 256-277 (TQYIQISDTIIGTGDDCISIVS). Asp270 functions as the Proton donor in the catalytic mechanism. N-linked (GlcNAc...) asparagine glycosylation occurs at Asn286. The active site involves His293. 2 PbH1 repeats span residues 309-330 (VSNVTVNEAKIIGAENGVRIKT) and 338-359 (ASNIKFLNVEMQDVKYPIIIDQ). N-linked (GlcNAc...) asparagine glycosylation occurs at Asn311. The propeptide occupies 445–457 (LEISEDEALLYNY).

Belongs to the glycosyl hydrolase 28 family. As to quaternary structure, monomer PG2 (isoenzymes PG2A and PG2B). Also forms heterodimers called polygalacturonase 1 (PG1) with the beta subunit GP1. In terms of processing, N-glycosylated. PG2B isozyme has a greater degree of glycosylation than PG2A. Expressed only in ripening fruits (at protein level).

It localises to the secreted. Its subcellular location is the extracellular space. The protein localises to the apoplast. It is found in the cell wall. It catalyses the reaction (1,4-alpha-D-galacturonosyl)n+m + H2O = (1,4-alpha-D-galacturonosyl)n + (1,4-alpha-D-galacturonosyl)m.. In terms of biological role, catalytic subunit of the polygalacturonase isozyme 1 and 2 (PG1 and PG2). Acts in concert with the pectinesterase, in the ripening process. Is involved in cell wall metabolism, specifically in polyuronide degradation. The depolymerization and solubilization of cell wall polyuronides mediated by PG2 during ripening seems to be limited by the beta subunit GP1, probably by recruiting PG2 to form PG1. This chain is Polygalacturonase-2 (PG2), found in Solanum lycopersicum (Tomato).